A 1590-amino-acid polypeptide reads, in one-letter code: von Willebrand factor D and EGF domain-containing protein (1590 aa).

An N-terminal signal peptide occupies residues Met-1–Ala-20. Asn-367 carries N-linked (GlcNAc...) asparagine glycosylation. One can recognise a VWFD domain in the interval Ala-423 to Met-606. Intrachain disulfides connect Cys-425–Cys-565 and Cys-468–Cys-477. Asn-703 and Asn-968 each carry an N-linked (GlcNAc...) asparagine glycan. The EGF-like 1 domain occupies Thr-1177 to Glu-1216. Intrachain disulfides connect Cys-1181-Cys-1189, Cys-1183-Cys-1204, and Cys-1206-Cys-1215. Over residues Asp-1268 to Ala-1280 the composition is skewed to basic and acidic residues. The segment at Asp-1268–Lys-1288 is disordered. 6 consecutive EGF-like domains span residues Ala-1294 to Gln-1326, Asp-1358 to Glu-1390, Ser-1422 to Gln-1454, Asn-1455 to Gln-1486, Asn-1518 to Gln-1550, and Ile-1551 to Glu-1582. Intrachain disulfides connect Cys-1298-Cys-1308, Cys-1302-Cys-1314, Cys-1316-Cys-1325, Cys-1362-Cys-1372, Cys-1366-Cys-1378, Cys-1380-Cys-1389, Cys-1426-Cys-1436, Cys-1430-Cys-1442, Cys-1444-Cys-1453, Cys-1458-Cys-1468, Cys-1462-Cys-1474, Cys-1522-Cys-1532, Cys-1526-Cys-1538, Cys-1540-Cys-1549, Cys-1554-Cys-1564, Cys-1558-Cys-1570, and Cys-1572-Cys-1581.

The protein localises to the secreted. This chain is von Willebrand factor D and EGF domain-containing protein (VWDE), found in Homo sapiens (Human).